A 374-amino-acid chain; its full sequence is Copper-containing nitrite reductase (374 aa).

The tat-type signal signal peptide spans 1–31 (MFTRRAALVGAAALASAPLVIRTAGAEEAPA). Plastocyanin-like domains follow at residues 93–189 (MTFD…IMVL) and 254–355 (GAVG…VLVE). Positions 126, 131, 166, 167, 177, 182, and 338 each coordinate Cu cation.

It belongs to the multicopper oxidase family. As to quaternary structure, homotrimer. Requires Cu(2+) as cofactor. Cu(+) serves as cofactor. It depends on FAD as a cofactor. In terms of processing, predicted to be exported by the Tat system. The position of the signal peptide cleavage has not been experimentally proven.

The protein resides in the periplasm. The catalysed reaction is nitric oxide + Fe(III)-[cytochrome c] + H2O = Fe(II)-[cytochrome c] + nitrite + 2 H(+). The protein operates within nitrogen metabolism; nitrate reduction (denitrification); dinitrogen from nitrate: step 2/4. The chain is Copper-containing nitrite reductase (nirK) from Cereibacter sphaeroides (strain ATCC 17025 / ATH 2.4.3) (Rhodobacter sphaeroides).